The chain runs to 206 residues: Large ribosomal subunit protein bL25 (206 aa).

The tract at residues 168 to 206 (DPEESVVTVEVPEDASESTAAPEAAAPAADAAAPAADAK) is disordered. Over residues 184-206 (ESTAAPEAAAPAADAAAPAADAK) the composition is skewed to low complexity.

This sequence belongs to the bacterial ribosomal protein bL25 family. CTC subfamily. Part of the 50S ribosomal subunit; part of the 5S rRNA/L5/L18/L25 subcomplex. Contacts the 5S rRNA. Binds to the 5S rRNA independently of L5 and L18.

This is one of the proteins that binds to the 5S RNA in the ribosome where it forms part of the central protuberance. The protein is Large ribosomal subunit protein bL25 of Bifidobacterium longum (strain DJO10A).